Consider the following 474-residue polypeptide: DNA-binding protein (474 aa).

The segment at methionine 1–lysine 34 is disordered. Tyrosine 142 bears the Phosphotyrosine; by host mark. Zn(2+) is bound by residues cysteine 231 and histidine 233. Positions valine 244–isoleucine 278 are flexible loop. 6 residues coordinate Zn(2+): cysteine 286, cysteine 302, cysteine 343, cysteine 345, cysteine 397, and cysteine 413. Positions valine 460–phenylalanine 474 are C-terminal arm, DBP binding.

The protein belongs to the adenoviridae E2A DNA-binding protein family. As to quaternary structure, homomultimerizes on viral ssDNA bound to pTP. Forms a initiation complex with viral polymerase, pTP and hosts NFIA and POU2F1/OCT1. Interacts with host SRCAP.

It localises to the host nucleus. Its function is as follows. Plays a role in the elongation phase of viral strand displacement replication by unwinding the template in an ATP-independent fashion, employing its capacity to form multimers. Also enhances the rate of initiation. Released from template upon second strand synthesis. Assembles in complex with viral pTP, viral pol, host NFIA and host POU2F1/OCT1 on viral origin of replication. Covers the whole ssDNA genome during synthesis. The complementary strand synthesis induces its relese from DNA template. May inhibit cellular transcription mediated by the interaction between host SRCAP and CBP. This chain is DNA-binding protein, found in Homo sapiens (Human).